A 326-amino-acid polypeptide reads, in one-letter code: Adenine deaminase (326 aa).

His-14, His-16, and His-194 together coordinate Zn(2+). The active-site Proton donor is the Glu-197. Residue Asp-275 coordinates Zn(2+). Asp-276 lines the substrate pocket.

It belongs to the metallo-dependent hydrolases superfamily. Adenosine and AMP deaminases family. Adenine deaminase type 2 subfamily. Zn(2+) serves as cofactor.

It carries out the reaction adenine + H2O + H(+) = hypoxanthine + NH4(+). Its function is as follows. Catalyzes the hydrolytic deamination of adenine to hypoxanthine. Plays an important role in the purine salvage pathway and in nitrogen catabolism. This is Adenine deaminase from Crocosphaera subtropica (strain ATCC 51142 / BH68) (Cyanothece sp. (strain ATCC 51142)).